The sequence spans 233 residues: Large ribosomal subunit protein uL1 (233 aa).

The protein belongs to the universal ribosomal protein uL1 family. As to quaternary structure, part of the 50S ribosomal subunit.

Its function is as follows. Binds directly to 23S rRNA. The L1 stalk is quite mobile in the ribosome, and is involved in E site tRNA release. Protein L1 is also a translational repressor protein, it controls the translation of the L11 operon by binding to its mRNA. In Shewanella sp. (strain ANA-3), this protein is Large ribosomal subunit protein uL1.